Consider the following 289-residue polypeptide: MEIKDLQIFQKVVEYGSVSKAAKSLNYVQSYVTVRIQKLEEELQTELFHRSSRGMVLNSEGKTLLFYSQNIISMVDEMIKVVQDCDNPAGSLEIGTVETVNKLPSILSAYHKKYPKIDLSLITGVTEDLVDDVLNYKLDGAFVTGYYNHPQIIQYEVFEEELVLISNYDKLPFEELKNKPLLVFKQGCSYRAKLEGWVRDEGEINAKIMEFGTMETILGSVIAGLGITIIPKSTISLLEAEGVVRIYEIPEKYSKITTVFIHRADTFLTNALQKFIETIKNAPETARKL.

Residues 1-58 form the HTH lysR-type domain; that stretch reads MEIKDLQIFQKVVEYGSVSKAAKSLNYVQSYVTVRIQKLEEELQTELFHRSSRGMVLN. The H-T-H motif DNA-binding region spans 18 to 37; the sequence is VSKAAKSLNYVQSYVTVRIQ.

This sequence belongs to the LysR transcriptional regulatory family.

Transcriptional repressor of soxA gene expression. This is HTH-type transcriptional regulator SoxR (soxR) from Arthrobacter sp. (strain TE1826).